We begin with the raw amino-acid sequence, 240 residues long: UDP-2,3-diacylglucosamine hydrolase (240 aa).

Mn(2+) contacts are provided by aspartate 8, histidine 10, aspartate 41, asparagine 79, and histidine 114. 79-80 (NR) contacts substrate. 5 residues coordinate substrate: aspartate 122, serine 160, asparagine 164, lysine 167, and histidine 195. Positions 195 and 197 each coordinate Mn(2+).

It belongs to the LpxH family. The cofactor is Mn(2+).

Its subcellular location is the cell inner membrane. The enzyme catalyses UDP-2-N,3-O-bis[(3R)-3-hydroxytetradecanoyl]-alpha-D-glucosamine + H2O = 2-N,3-O-bis[(3R)-3-hydroxytetradecanoyl]-alpha-D-glucosaminyl 1-phosphate + UMP + 2 H(+). Its pathway is glycolipid biosynthesis; lipid IV(A) biosynthesis; lipid IV(A) from (3R)-3-hydroxytetradecanoyl-[acyl-carrier-protein] and UDP-N-acetyl-alpha-D-glucosamine: step 4/6. Hydrolyzes the pyrophosphate bond of UDP-2,3-diacylglucosamine to yield 2,3-diacylglucosamine 1-phosphate (lipid X) and UMP by catalyzing the attack of water at the alpha-P atom. Involved in the biosynthesis of lipid A, a phosphorylated glycolipid that anchors the lipopolysaccharide to the outer membrane of the cell. In Klebsiella pneumoniae subsp. pneumoniae (strain ATCC 700721 / MGH 78578), this protein is UDP-2,3-diacylglucosamine hydrolase.